A 259-amino-acid chain; its full sequence is Protein FAM220A (259 aa).

In terms of assembly, interacts with transcriptional activator STAT3; the interaction occurs in both the nucleus and the cytoplasm, is enhanced by IL6 and promotes STAT3 dephosphorylation, leading to negative regulation of STAT3 transcriptional activator activity. Can interact with both unphosphorylated and phosphorylated STAT3 but interacts preferentially with phosphorylated STAT3 in the nucleus. Interacts with protein phosphatase PTPN2/TC45; this promotes interaction of PTPN2 with STAT3, leading to dephosphorylation of STAT3 by PTPN2.

It localises to the nucleus. It is found in the cytoplasm. Its subcellular location is the cytoplasmic vesicle. The protein localises to the secretory vesicle. The protein resides in the acrosome. Its function is as follows. Promotes dephosphorylation of transcriptional activator STAT3 by interacting with both STAT3 and protein phosphatase PTPN2. This promotes interaction of PTPN2 with STAT3 and mediates STAT3 dephosphorylation by PTPN2, leading to negative regulation of STAT3 transcriptional activator activity. May be required for spermiogenesis or sperm function. The sequence is that of Protein FAM220A (FAM220A) from Macaca fascicularis (Crab-eating macaque).